A 281-amino-acid chain; its full sequence is Pantothenate synthetase (281 aa).

30-37 (MGYLHEGH) is a binding site for ATP. Catalysis depends on His37, which acts as the Proton donor. Gln61 contributes to the (R)-pantoate binding site. Gln61 is a beta-alanine binding site. Residue 147-150 (GQKD) coordinates ATP. (R)-pantoate is bound at residue Gln153. ATP contacts are provided by residues Val176 and 184–187 (MSSR).

The protein belongs to the pantothenate synthetase family. As to quaternary structure, homodimer.

The protein localises to the cytoplasm. It carries out the reaction (R)-pantoate + beta-alanine + ATP = (R)-pantothenate + AMP + diphosphate + H(+). Its pathway is cofactor biosynthesis; (R)-pantothenate biosynthesis; (R)-pantothenate from (R)-pantoate and beta-alanine: step 1/1. Its function is as follows. Catalyzes the condensation of pantoate with beta-alanine in an ATP-dependent reaction via a pantoyl-adenylate intermediate. This Heliobacterium modesticaldum (strain ATCC 51547 / Ice1) protein is Pantothenate synthetase.